A 424-amino-acid polypeptide reads, in one-letter code: Histidine--tRNA ligase (424 aa).

The protein belongs to the class-II aminoacyl-tRNA synthetase family. In terms of assembly, homodimer.

It localises to the cytoplasm. It catalyses the reaction tRNA(His) + L-histidine + ATP = L-histidyl-tRNA(His) + AMP + diphosphate + H(+). This chain is Histidine--tRNA ligase, found in Escherichia coli O127:H6 (strain E2348/69 / EPEC).